Here is a 205-residue protein sequence, read N- to C-terminus: Imidazole glycerol phosphate synthase subunit HisH (205 aa).

One can recognise a Glutamine amidotransferase type-1 domain in the interval 3-205 (KIGLIDYGMG…LLRRWIKSIQ (203 aa)). Cysteine 81 acts as the Nucleophile in catalysis. Residues histidine 185 and glutamate 187 contribute to the active site.

Heterodimer of HisH and HisF.

It is found in the cytoplasm. It carries out the reaction 5-[(5-phospho-1-deoxy-D-ribulos-1-ylimino)methylamino]-1-(5-phospho-beta-D-ribosyl)imidazole-4-carboxamide + L-glutamine = D-erythro-1-(imidazol-4-yl)glycerol 3-phosphate + 5-amino-1-(5-phospho-beta-D-ribosyl)imidazole-4-carboxamide + L-glutamate + H(+). The enzyme catalyses L-glutamine + H2O = L-glutamate + NH4(+). It participates in amino-acid biosynthesis; L-histidine biosynthesis; L-histidine from 5-phospho-alpha-D-ribose 1-diphosphate: step 5/9. In terms of biological role, IGPS catalyzes the conversion of PRFAR and glutamine to IGP, AICAR and glutamate. The HisH subunit catalyzes the hydrolysis of glutamine to glutamate and ammonia as part of the synthesis of IGP and AICAR. The resulting ammonia molecule is channeled to the active site of HisF. The polypeptide is Imidazole glycerol phosphate synthase subunit HisH (Prochlorococcus marinus subsp. pastoris (strain CCMP1986 / NIES-2087 / MED4)).